We begin with the raw amino-acid sequence, 258 residues long: UPF0246 protein CGSHiGG_08495 (258 aa).

It belongs to the UPF0246 family.

This chain is UPF0246 protein CGSHiGG_08495, found in Haemophilus influenzae (strain PittGG).